A 528-amino-acid polypeptide reads, in one-letter code: Bifunctional purine biosynthesis protein PurH (528 aa).

Residues 1 to 146 enclose the MGS-like domain; the sequence is MAPTALLSVS…KNHDHVAVLT (146 aa).

The protein belongs to the PurH family.

It catalyses the reaction (6R)-10-formyltetrahydrofolate + 5-amino-1-(5-phospho-beta-D-ribosyl)imidazole-4-carboxamide = 5-formamido-1-(5-phospho-D-ribosyl)imidazole-4-carboxamide + (6S)-5,6,7,8-tetrahydrofolate. The enzyme catalyses IMP + H2O = 5-formamido-1-(5-phospho-D-ribosyl)imidazole-4-carboxamide. The protein operates within purine metabolism; IMP biosynthesis via de novo pathway; 5-formamido-1-(5-phospho-D-ribosyl)imidazole-4-carboxamide from 5-amino-1-(5-phospho-D-ribosyl)imidazole-4-carboxamide (10-formyl THF route): step 1/1. It functions in the pathway purine metabolism; IMP biosynthesis via de novo pathway; IMP from 5-formamido-1-(5-phospho-D-ribosyl)imidazole-4-carboxamide: step 1/1. This chain is Bifunctional purine biosynthesis protein PurH, found in Synechococcus sp. (strain WH7803).